The primary structure comprises 593 residues: Chromodomain Y-like protein (593 aa).

Over residues 1 to 14 (MGIGNSQPNSQEAQ) the composition is skewed to polar residues. The disordered stretch occupies residues 1–30 (MGIGNSQPNSQEAQLCTLPEKAEQPTDDNT). A Chromo domain is found at 56–116 (TQVESIVDKR…RHNERQKEGS (61 aa)). Residues 56 to 304 (TQVESIVDKR…TIQTSVTGVT (249 aa)) form an interaction with EZH2 region. The residue at position 83 (serine 83) is a Phosphoserine. The disordered stretch occupies residues 110–158 (ERQKEGSLARASRASPSNARKQISRSTHSTLSKTNSKALVVGKDHESKS). Residues 117 to 129 (LARASRASPSNAR) are compositionally biased toward low complexity. Lysine 130 carries the N6,N6,N6-trimethyllysine; by EHMT2; alternate modification. Lysine 130 is modified (N6,N6-dimethyllysine; by EHMT2; alternate). Lysine 130 carries the N6-methyllysine; by EHMT2; alternate modification. Over residues 133–146 (SRSTHSTLSKTNSK) the composition is skewed to polar residues. 3 positions are modified to phosphoserine: serine 165, serine 196, and serine 211. The segment at 200–223 (GRTSVDGFQGESPEKLDPVDQGAE) is disordered. The segment at 357–589 (SENNSLNPEV…DSMLKYLQRK (233 aa)) is acetyl-CoA-binding domain.

In terms of assembly, forms multimers and multimerization is required for stable binding to chromatin. Interacts with HDAC1 and HDAC2 via its C-terminal acetyl-CoA-binding domain. Interacts with EZH2, EED, SUZ12, REST, EHMT1 and EHMT2. Part of a complex containing at least CDYL, REST, WIZ, SETB1, EHMT1 and EHMT2. Part of a complex containing at least CDYL, MIER1, MIER2, HDAC1 and HDAC2. Interacts with CHAF1A and CHAF1B; bridging the CAF-1 complex to the MCM2-7 (MCM) complex. Interacts with MCM3 and MCM5; bridging the CAF-1 complex to the MCM2-7 (MCM) complex. Interacts with EHMT2 and PRDM9; interaction only takes place when PRDM9 is bound to hotspot DNA. In terms of tissue distribution, highly expressed in testis (at protein level). Expressed in the hippocampus (at protein level). Expressed in the medial prefrontal cortex, prelimbic cortex, intralimbic cortex and cingulate cortex area (at protein level). Isoform 1: Expressed as 2 transcripts encoding the same protein, a ubiquitous transcript and a highly expressed testis-specific transcript.

The protein resides in the nucleus. It localises to the chromosome. The catalysed reaction is L-lysyl-[protein] + acetyl-CoA = N(6)-acetyl-L-lysyl-[protein] + CoA + H(+). The enzyme catalyses 3-hydroxybutanoyl-CoA = (2E)-butenoyl-CoA + H2O. Its function is as follows. Chromatin reader protein that recognizes and binds histone H3 trimethylated at 'Lys-9', dimethylated at 'Lys-27' and trimethylated at 'Lys-27' (H3K9me3, H3K27me2 and H3K27me3, respectively). Part of multimeric repressive chromatin complexes, where it is required for transmission and restoration of repressive histone marks, thereby preserving the epigenetic landscape. Required for chromatin targeting and maximal enzymatic activity of Polycomb repressive complex 2 (PRC2); acts as a positive regulator of PRC2 activity by bridging the pre-existing histone H3K27me3 and newly recruited PRC2 on neighboring nucleosomes. Acts as a corepressor for REST by facilitating histone-lysine N-methyltransferase EHMT2 recruitment and H3K9 dimethylation at REST target genes for repression. Involved in X chromosome inactivation in females: recruited to Xist RNA-coated X chromosome and facilitates propagation of H3K9me2 by anchoring EHMT2. Promotes EZH2 accumulation and H3K27me3 methylation at DNA double strand breaks (DSBs), thereby facilitating transcriptional repression at sites of DNA damage and homology-directed repair of DSBs. Required for neuronal migration during brain development by repressing expression of RHOA. By repressing the expression of SCN8A, contributes to the inhibition of intrinsic neuronal excitability and epileptogenesis. In addition to acting as a chromatin reader, acts as a hydro-lyase. Shows crotonyl-coA hydratase activity by mediating the conversion of crotonyl-CoA ((2E)-butenoyl-CoA) to beta-hydroxybutyryl-CoA (3-hydroxybutanoyl-CoA), thereby acting as a negative regulator of histone crotonylation. Histone crotonylation is required during spermatogenesis; down-regulation of histone crotonylation by CDYL regulates the reactivation of sex chromosome-linked genes in round spermatids and histone replacement in elongating spermatids. By regulating histone crotonylation and trimethylation of H3K27, may be involved in stress-induced depression-like behaviors, possibly by regulating VGF expression. May have histone acetyltransferase activity; such activity is however unsure in vivo. In terms of biological role, not able to recognize and bind histone H3K9me3, histone H3K27me2 and histone H3K27me3, due to the presence of a N-terminal extension that inactivates the chromo domain. In Mus musculus (Mouse), this protein is Chromodomain Y-like protein.